A 190-amino-acid chain; its full sequence is Pyridoxal 5'-phosphate synthase subunit PdxT (190 aa).

46–48 (GES) provides a ligand contact to L-glutamine. The active-site Nucleophile is the Cys-78. L-glutamine-binding positions include Arg-105 and 138-139 (IR). Catalysis depends on charge relay system residues His-174 and Glu-176.

It belongs to the glutaminase PdxT/SNO family. In the presence of PdxS, forms a dodecamer of heterodimers. Only shows activity in the heterodimer.

It catalyses the reaction aldehydo-D-ribose 5-phosphate + D-glyceraldehyde 3-phosphate + L-glutamine = pyridoxal 5'-phosphate + L-glutamate + phosphate + 3 H2O + H(+). It carries out the reaction L-glutamine + H2O = L-glutamate + NH4(+). Its pathway is cofactor biosynthesis; pyridoxal 5'-phosphate biosynthesis. Its function is as follows. Catalyzes the hydrolysis of glutamine to glutamate and ammonia as part of the biosynthesis of pyridoxal 5'-phosphate. The resulting ammonia molecule is channeled to the active site of PdxS. The chain is Pyridoxal 5'-phosphate synthase subunit PdxT from Bifidobacterium longum (strain NCC 2705).